The sequence spans 190 residues: Xanthine phosphoribosyltransferase (190 aa).

Positions 20 and 27 each coordinate xanthine. 128–132 (ANGEA) is a 5-phospho-alpha-D-ribose 1-diphosphate binding site. A xanthine-binding site is contributed by Lys156.

The protein belongs to the purine/pyrimidine phosphoribosyltransferase family. Xpt subfamily. As to quaternary structure, homodimer.

The protein localises to the cytoplasm. The catalysed reaction is XMP + diphosphate = xanthine + 5-phospho-alpha-D-ribose 1-diphosphate. It participates in purine metabolism; XMP biosynthesis via salvage pathway; XMP from xanthine: step 1/1. In terms of biological role, converts the preformed base xanthine, a product of nucleic acid breakdown, to xanthosine 5'-monophosphate (XMP), so it can be reused for RNA or DNA synthesis. This is Xanthine phosphoribosyltransferase from Clostridium botulinum (strain Eklund 17B / Type B).